The primary structure comprises 410 residues: MTARLALLASLLLLLQLVPPSSAVVLELHGNVYPIGHFFITMNIGDPAKSYFLDIDTGSTLTWLQCDAPCTNCNIVPHVLYKPTPKKLVTCADSLCTDLYTDLGKPKRCGSQKQCDYVIQYVDSSSMGVLVIDRFSLSASNGTNPTTIAFGCGYDQGKKNRNVPIPVDSILGLSRGKVTLLSQLKSQGVITKHVLGHCISSKGGGFLFFGDAQVPTSGVTWTPMNREHKYYSPGHGTLHFDSNSKAISAAPMAVIFDSGATYTYFAAQPYQATLSVVKSTLNSECKFLTEVTEKDRALTVCWKGKDKIVTIDEVKKCFRSLSLEFADGDKKATLEIPPEHYLIISQEGHVCLGILDGSKEHLSLAGTNLIGGITMLDQMVIYDSERSLLGWVNYQCDRIPRSESAITSRL.

Positions 1 to 23 (MTARLALLASLLLLLQLVPPSSA) are cleaved as a signal peptide. The propeptide at 24-46 (VVLELHGNVYPIGHFFITMNIGD) is removed in mature form. One can recognise a Peptidase A1 domain in the interval 38 to 392 (FFITMNIGDP…DSERSLLGWV (355 aa)). Catalysis depends on residues D56 and D257.

Belongs to the peptidase A1 family.

The sequence is that of Aspartic proteinase Asp1 (ASP1) from Oryza sativa subsp. japonica (Rice).